The chain runs to 431 residues: Ribosomal RNA small subunit methyltransferase B (431 aa).

Residues 254-260 (CAAPGGK), aspartate 277, aspartate 303, and aspartate 322 contribute to the S-adenosyl-L-methionine site. The Nucleophile role is filled by cysteine 375. A disordered region spans residues 398–417 (LHATGTPASPGQQNLPGPEE). The span at 403 to 412 (TPASPGQQNL) shows a compositional bias: polar residues.

The protein belongs to the class I-like SAM-binding methyltransferase superfamily. RsmB/NOP family.

The protein resides in the cytoplasm. It carries out the reaction cytidine(967) in 16S rRNA + S-adenosyl-L-methionine = 5-methylcytidine(967) in 16S rRNA + S-adenosyl-L-homocysteine + H(+). Specifically methylates the cytosine at position 967 (m5C967) of 16S rRNA. The sequence is that of Ribosomal RNA small subunit methyltransferase B from Klebsiella pneumoniae (strain 342).